An 890-amino-acid chain; its full sequence is uncharacterized protein (890 aa).

A signal peptide spans Met-1–Ala-20. The next 6 membrane-spanning stretches (helical) occupy residues Ala-518–Leu-538, Thr-567–Ala-587, Leu-613–Ile-633, Val-651–Met-671, Ile-684–Ile-704, and Phe-775–Leu-795. Residues Lys-860–Glu-890 form a disordered region. Over residues Arg-862–Glu-890 the composition is skewed to basic and acidic residues.

This sequence belongs to the TrbL/VirB6 family.

The protein localises to the cell membrane. This is an uncharacterized protein from Rickettsia felis (strain ATCC VR-1525 / URRWXCal2) (Rickettsia azadi).